Reading from the N-terminus, the 657-residue chain is Probable potassium transport system protein Kup (657 aa).

12 helical membrane-spanning segments follow: residues 14–34 (IGGL…SPLY), 47–67 (ADIV…QTTI), 96–116 (IQWL…DGII), 140–160 (TIVY…QFGT), 166–186 (FFAP…FIQI), 201–221 (AYHL…VFLC), 242–262 (ISWI…AAYL), 283–303 (LIMP…AAVI), 340–360 (LYIP…VLHF), 371–391 (GLAI…YLIM), 396–416 (LYFM…FLIA), and 425–445 (GYVT…WYLA).

This sequence belongs to the HAK/KUP transporter (TC 2.A.72) family.

Its subcellular location is the cell inner membrane. The catalysed reaction is K(+)(in) + H(+)(in) = K(+)(out) + H(+)(out). Functionally, transport of potassium into the cell. Likely operates as a K(+):H(+) symporter. This Flavobacterium johnsoniae (strain ATCC 17061 / DSM 2064 / JCM 8514 / BCRC 14874 / CCUG 350202 / NBRC 14942 / NCIMB 11054 / UW101) (Cytophaga johnsonae) protein is Probable potassium transport system protein Kup.